Here is a 257-residue protein sequence, read N- to C-terminus: UPF0246 protein BF4021 (257 aa).

This sequence belongs to the UPF0246 family.

The protein is UPF0246 protein BF4021 of Bacteroides fragilis (strain YCH46).